The following is a 244-amino-acid chain: Phosphoadenosine 5'-phosphosulfate reductase (244 aa).

Cys-239 functions as the Nucleophile; cysteine thiosulfonate intermediate in the catalytic mechanism.

This sequence belongs to the PAPS reductase family. CysH subfamily.

The protein localises to the cytoplasm. The catalysed reaction is [thioredoxin]-disulfide + sulfite + adenosine 3',5'-bisphosphate + 2 H(+) = [thioredoxin]-dithiol + 3'-phosphoadenylyl sulfate. It functions in the pathway sulfur metabolism; hydrogen sulfide biosynthesis; sulfite from sulfate: step 3/3. Catalyzes the formation of sulfite from phosphoadenosine 5'-phosphosulfate (PAPS) using thioredoxin as an electron donor. This Citrobacter koseri (strain ATCC BAA-895 / CDC 4225-83 / SGSC4696) protein is Phosphoadenosine 5'-phosphosulfate reductase.